The sequence spans 879 residues: DNA mismatch repair protein MutS (879 aa).

Residue 629 to 636 (GPNMGGKS) participates in ATP binding.

The protein belongs to the DNA mismatch repair MutS family.

Its function is as follows. This protein is involved in the repair of mismatches in DNA. It is possible that it carries out the mismatch recognition step. This protein has a weak ATPase activity. The sequence is that of DNA mismatch repair protein MutS from Erythrobacter litoralis (strain HTCC2594).